A 181-amino-acid chain; its full sequence is Der GTPase-activating protein YihI (181 aa).

2 disordered regions span residues 1–75 (MSRK…KKIP) and 145–181 (EPEAEEEFEEEAPVRKSRSDDDLLADFEDFDMDDYKG). Residues 32–43 (RLRKKDKKRKGL) are compositionally biased toward basic residues. Residues 146 to 155 (PEAEEEFEEE) show a composition bias toward acidic residues. Basic and acidic residues predominate over residues 156–165 (APVRKSRSDD). The segment covering 166–181 (DLLADFEDFDMDDYKG) has biased composition (acidic residues).

The protein belongs to the YihI family. Interacts with Der.

Its function is as follows. A GTPase-activating protein (GAP) that modifies Der/EngA GTPase function. May play a role in ribosome biogenesis. This chain is Der GTPase-activating protein YihI, found in Vibrio vulnificus (strain CMCP6).